The primary structure comprises 355 residues: Protein pelota homolog (355 aa).

Belongs to the eukaryotic release factor 1 family. Pelota subfamily. Monomer. The cofactor is a divalent metal cation.

It localises to the cytoplasm. Functionally, may function in recognizing stalled ribosomes, interact with stem-loop structures in stalled mRNA molecules, and effect endonucleolytic cleavage of the mRNA. May play a role in the release non-functional ribosomes and degradation of damaged mRNAs. Has endoribonuclease activity. This Halorubrum lacusprofundi (strain ATCC 49239 / DSM 5036 / JCM 8891 / ACAM 34) protein is Protein pelota homolog.